Consider the following 195-residue polypeptide: Imidazoleglycerol-phosphate dehydratase (195 aa).

It belongs to the imidazoleglycerol-phosphate dehydratase family.

It localises to the cytoplasm. It catalyses the reaction D-erythro-1-(imidazol-4-yl)glycerol 3-phosphate = 3-(imidazol-4-yl)-2-oxopropyl phosphate + H2O. It functions in the pathway amino-acid biosynthesis; L-histidine biosynthesis; L-histidine from 5-phospho-alpha-D-ribose 1-diphosphate: step 6/9. In Pelotomaculum thermopropionicum (strain DSM 13744 / JCM 10971 / SI), this protein is Imidazoleglycerol-phosphate dehydratase.